The primary structure comprises 232 residues: BTB/POZ domain-containing protein KCTD11 (232 aa).

Residues 1–49 form the BTB domain; it reads MLGAMFRADTLMPANLNPQGDGHYFIDRDGKAFRHILNFLRLGRLDLPR.

Homopentamer. Interacts with KCTD6 and KCTD21; KCTD11 and KCTD6 or KCTD21 may associate in pentameric assemblies. Component of the BCR(KCTD11) E3 ubiquitin ligase complex, at least composed of CUL3 and KCTD11 and RBX1. Interacts (via BTB domain) with CUL3; initially a 4:4 stoichiometry has been reported, however, electron microscopy revealed pentameric states of the BTB domain. In terms of tissue distribution, weakly expressed in lung. In the cerebellum, higher expression in non proliferating external granule cells layer than in highly proliferating ones.

It participates in protein modification; protein ubiquitination. Plays a role as a marker and a regulator of neuronal differentiation; Up-regulated by a variety of neurogenic signals, such as retinoic acid, epidermal growth factor/EGF and NGFB/nerve growth factor. Induces apoptosis, growth arrest and the expression of cyclin-dependent kinase inhibitor CDKN1B. Plays a role as a tumor repressor and inhibits cell growth and tumorigenicity of medulloblastoma (MDB). Acts as a probable substrate-specific adapter for a BCR (BTB-CUL3-RBX1) E3 ubiquitin-protein ligase complex towards HDAC1. Functions as antagonist of the Hedgehog pathway on cell proliferation and differentiation by affecting the nuclear transfer of transcription factor GLI1, thus maintaining cerebellar granule cells in undifferentiated state, this effect probably occurs via HDAC1 down-regulation, keeping GLI1 acetylated and inactive. When knock-down, Hedgehog antagonism is impaired and proliferation of granule cells is sustained. Activates the caspase cascade. The polypeptide is BTB/POZ domain-containing protein KCTD11 (Kctd11) (Mus musculus (Mouse)).